A 525-amino-acid polypeptide reads, in one-letter code: Tigger transposable element-derived protein 2 (525 aa).

The HTH psq-type domain occupies 1–52 (MLGKRKRVVLTIKDKLDIIKKLEEGNSFKKLSVLYGIGESTVRDIKKNKERI). 2 consecutive DNA-binding regions (H-T-H motif) follow at residues 28-48 (FKKL…IKKN) and 100-132 (TICA…FKQR). In terms of domain architecture, HTH CENPB-type spans 67-139 (KRKSMKSSTY…KQRHGIPKAA (73 aa)). The DDE-1 domain maps to 168–385 (LLPEQIYGAD…IRSNTITRAW (218 aa)).

The protein belongs to the tigger transposable element derived protein family.

The protein resides in the nucleus. This chain is Tigger transposable element-derived protein 2 (Tigd2), found in Mus musculus (Mouse).